We begin with the raw amino-acid sequence, 172 residues long: Gamma-crystallin-4 (172 aa).

Beta/gamma crystallin 'Greek key' domains follow at residues isoleucine 1–serine 37 and glycine 38–proline 80. The interval histidine 81–glutamine 85 is connecting peptide. Beta/gamma crystallin 'Greek key' domains lie at tyrosine 86 to aspartate 126 and glycine 127 to histidine 169.

The protein belongs to the beta/gamma-crystallin family. In terms of assembly, monomer.

In terms of biological role, crystallins are the dominant structural components of the vertebrate eye lens. The chain is Gamma-crystallin-4 (cryg4) from Xenopus laevis (African clawed frog).